The following is a 229-amino-acid chain: uncharacterized protein (229 aa).

7 consecutive transmembrane segments (helical) span residues 21–41 (IYSLVGMGVGLSAFVSYLMLY), 56–76 (MIYYGAAIIELILVFVASGAA), 83–103 (ALPIFLIYSALNGFTLSFIIV), 109–129 (TVFQAFLSSAAVFFAMSIIGV), 141–161 (AMFAALIGVVVASLINLFIGS), 162–182 (GMMSYVISVISVLIFSGLIAS), and 202–222 (WAVAMALSLYLDFINLFISLL).

The protein belongs to the BI1 family.

It localises to the cell membrane. This is an uncharacterized protein from Streptococcus pyogenes serotype M6 (strain ATCC BAA-946 / MGAS10394).